The primary structure comprises 489 residues: Endothelial zinc finger protein induced by tumor necrosis factor alpha (489 aa).

Residues 1–15 are compositionally biased toward basic and acidic residues; the sequence is MKELDPKNDISEDKL. 2 disordered regions span residues 1-61 and 98-122; these read MKEL…PLGI and EKGA…KPPM. C2H2-type zinc fingers lie at residues 130 to 152, 158 to 180, 186 to 208, 214 to 236, 242 to 264, 270 to 292, 298 to 320, 326 to 348, 354 to 376, 382 to 404, 410 to 432, 438 to 460, and 466 to 488; these read YDCS…QRIH, FECD…QRVH, YACG…QRTH, YVCD…ERIH, YVCP…QRTH, YACK…QRNH, YVCG…QRFH, FECS…QRIH, YECY…QIVH, YVCG…QRIH, YRCG…QRIH, and YRCG…LRIH.

Belongs to the krueppel C2H2-type zinc-finger protein family. Highly expressed in placenta, followed by brain, testis, pancreas, heart, small intestine, muscle, uterus, prostate and peripheral blood leukocytes. Not detected in liver, lung, colon, stomach, salivary and thyroid gland.

The protein resides in the nucleus. In terms of biological role, may be involved in transcriptional regulation. The chain is Endothelial zinc finger protein induced by tumor necrosis factor alpha (ZNF71) from Homo sapiens (Human).